A 387-amino-acid polypeptide reads, in one-letter code: Cysteine desulfurase IscS (387 aa).

Pyridoxal 5'-phosphate is bound by residues 73–74, N155, Q183, and 203–205; these read AT and SAH. K206 carries the N6-(pyridoxal phosphate)lysine modification. T241 contacts pyridoxal 5'-phosphate. The active-site Cysteine persulfide intermediate is C328. Position 328 (C328) interacts with [2Fe-2S] cluster.

Belongs to the class-V pyridoxal-phosphate-dependent aminotransferase family. NifS/IscS subfamily. In terms of assembly, homodimer. Forms a heterotetramer with IscU, interacts with other sulfur acceptors. Requires pyridoxal 5'-phosphate as cofactor.

The protein localises to the cytoplasm. It catalyses the reaction (sulfur carrier)-H + L-cysteine = (sulfur carrier)-SH + L-alanine. It functions in the pathway cofactor biosynthesis; iron-sulfur cluster biosynthesis. In terms of biological role, master enzyme that delivers sulfur to a number of partners involved in Fe-S cluster assembly, tRNA modification or cofactor biosynthesis. Catalyzes the removal of elemental sulfur atoms from cysteine to produce alanine. Functions as a sulfur delivery protein for Fe-S cluster synthesis onto IscU, an Fe-S scaffold assembly protein, as well as other S acceptor proteins. This Helicobacter pylori (strain J99 / ATCC 700824) (Campylobacter pylori J99) protein is Cysteine desulfurase IscS.